The primary structure comprises 103 residues: Large ribosomal subunit protein uL24 (103 aa).

It belongs to the universal ribosomal protein uL24 family. As to quaternary structure, part of the 50S ribosomal subunit.

One of two assembly initiator proteins, it binds directly to the 5'-end of the 23S rRNA, where it nucleates assembly of the 50S subunit. Its function is as follows. One of the proteins that surrounds the polypeptide exit tunnel on the outside of the subunit. This chain is Large ribosomal subunit protein uL24, found in Histophilus somni (strain 129Pt) (Haemophilus somnus).